The primary structure comprises 128 residues: Aspartate 1-decarboxylase (128 aa).

The Schiff-base intermediate with substrate; via pyruvic acid role is filled by S25. Residue S25 is modified to Pyruvic acid (Ser). T57 provides a ligand contact to substrate. The Proton donor role is filled by Y58. 73–75 is a substrate binding site; the sequence is GAA.

Belongs to the PanD family. As to quaternary structure, heterooctamer of four alpha and four beta subunits. Requires pyruvate as cofactor. In terms of processing, is synthesized initially as an inactive proenzyme, which is activated by self-cleavage at a specific serine bond to produce a beta-subunit with a hydroxyl group at its C-terminus and an alpha-subunit with a pyruvoyl group at its N-terminus.

It is found in the cytoplasm. The catalysed reaction is L-aspartate + H(+) = beta-alanine + CO2. Its pathway is cofactor biosynthesis; (R)-pantothenate biosynthesis; beta-alanine from L-aspartate: step 1/1. Catalyzes the pyruvoyl-dependent decarboxylation of aspartate to produce beta-alanine. In Staphylococcus epidermidis (strain ATCC 35984 / DSM 28319 / BCRC 17069 / CCUG 31568 / BM 3577 / RP62A), this protein is Aspartate 1-decarboxylase.